Here is a 285-residue protein sequence, read N- to C-terminus: Diphthine methyl ester synthase (285 aa).

S-adenosyl-L-methionine is bound by residues L9, D84, G87, 112 to 113 (SI), and L163. S171 is subject to Phosphoserine. Positions 225 and 250 each coordinate S-adenosyl-L-methionine.

The protein belongs to the diphthine synthase family.

It catalyses the reaction 2-[(3S)-amino-3-carboxypropyl]-L-histidyl-[translation elongation factor 2] + 4 S-adenosyl-L-methionine = diphthine methyl ester-[translation elongation factor 2] + 4 S-adenosyl-L-homocysteine + 3 H(+). The protein operates within protein modification; peptidyl-diphthamide biosynthesis. Its function is as follows. S-adenosyl-L-methionine-dependent methyltransferase that catalyzes four methylations of the modified target histidine residue in translation elongation factor 2 (EF-2), to form an intermediate called diphthine methyl ester. The four successive methylation reactions represent the second step of diphthamide biosynthesis. This is Diphthine methyl ester synthase (DPH5) from Homo sapiens (Human).